A 492-amino-acid polypeptide reads, in one-letter code: GMP reductase (492 aa).

NADP(+)-binding positions include serine 30 to arginine 31 and arginine 78. CBS domains lie at leucine 99–threonine 162 and methionine 164–threonine 223. NADP(+) contacts are provided by residues aspartate 260–alanine 262 and valine 313–glycine 314. Positions 314, 316, and 319 each coordinate K(+). The Thioimidate intermediate role is filled by cysteine 319. Threonine 321 functions as the Proton donor/acceptor in the catalytic mechanism. Arginine 322 is a K(+) binding site. Residues aspartate 352–glycine 354, glycine 375–asparagine 376, and glycine 401–alanine 403 each bind GMP. NADP(+) contacts are provided by residues methionine 402 and serine 454–serine 457. A Microbody targeting signal motif is present at residues serine 490–leucine 492.

Belongs to the IMPDH/GMPR family. GuaC type 1 subfamily. In terms of assembly, homotetramer.

It is found in the glycosome. It carries out the reaction IMP + NH4(+) + NADP(+) = GMP + NADPH + 2 H(+). With respect to regulation, activated by GTP and inhibited by ATP and IMP. Mycophenolic acid (MPA) is a competitive inhibitor of the enzyme with respect to NADPH. Its function is as follows. Catalyzes the irreversible NADPH-dependent deamination of GMP to IMP. It functions in the conversion of nucleobase, nucleoside and nucleotide derivatives of G to A nucleotides, and in maintaining the intracellular balance of A and G nucleotides. The polypeptide is GMP reductase (Leishmania major).